Reading from the N-terminus, the 196-residue chain is GTP cyclohydrolase 1 (196 aa).

Zn(2+) is bound by residues Cys86, His89, and Cys158.

It belongs to the GTP cyclohydrolase I family. In terms of assembly, homomer.

The enzyme catalyses GTP + H2O = 7,8-dihydroneopterin 3'-triphosphate + formate + H(+). It participates in cofactor biosynthesis; 7,8-dihydroneopterin triphosphate biosynthesis; 7,8-dihydroneopterin triphosphate from GTP: step 1/1. This is GTP cyclohydrolase 1 from Clostridium botulinum (strain Loch Maree / Type A3).